The sequence spans 177 residues: Thymidine kinase (177 aa).

Residue 11–18 participates in ATP binding; it reads GPMFSGKS. E83 serves as the catalytic Proton acceptor. A substrate-binding site is contributed by F113. Zn(2+) contacts are provided by C138 and C141. 157–161 lines the substrate pocket; that stretch reads IEIIG. Positions 170 and 173 each coordinate Zn(2+).

This sequence belongs to the thymidine kinase family. In terms of assembly, homotetramer. Two molecules of substrate bind to each enzyme tetramer.

It catalyses the reaction thymidine + ATP = dTMP + ADP + H(+). In terms of biological role, phosphorylates thymidine and thymidine analogs, such as azidothymidine (AZT). Part of the salvage pathway for pyrimidine deoxyribonucleotide synthesis. This chain is Thymidine kinase (OPG101), found in Variola virus.